The chain runs to 281 residues: Secretory carrier-associated membrane protein 5 (281 aa).

The segment at 1 to 49 is disordered; that stretch reads MHHDPNPFDEGADDNPFSNGGGGGARRGGGGGGGGGGGGGKSQFSFGFG. Residues 1-139 are Cytoplasmic-facing; it reads MHHDPNPFDE…AQKLQYLAFA (139 aa). Residues 19-49 are compositionally biased toward gly residues; the sequence is NGGGGGARRGGGGGGGGGGGGGKSQFSFGFG. Residues 76–102 are a coiled coil; the sequence is KELLQWEADLKRREADIRRREEALKSA. Transmembrane regions (helical) follow at residues 140 to 160, 167 to 187, 202 to 222, and 250 to 270; these read SWLGIVLCLFWNFIAVIVCWI, LFFLATIYGMLGMPLSYLMWY, FGWFFLCYMLHIAFCVFAAIA, and IFYFVGFALFCLETLVSIWVL. Over 271–281 the chain is Cytoplasmic; that stretch reads QKVYMYFRGHK.

This sequence belongs to the SCAMP family.

It localises to the cell membrane. The protein localises to the cytoplasmic vesicle. It is found in the secretory vesicle membrane. Functionally, probably involved in membrane trafficking. The sequence is that of Secretory carrier-associated membrane protein 5 (SCAMP5) from Oryza sativa subsp. japonica (Rice).